A 516-amino-acid chain; its full sequence is Cytochrome P450 monooxygenase otaC (516 aa).

A helical membrane pass occupies residues 13-30 (FLWTAFAVGVVYCCTRMV). A heme-binding site is contributed by Cys454.

The protein belongs to the cytochrome P450 family. Requires heme as cofactor.

Its subcellular location is the membrane. It catalyses the reaction 7-methylmellein + 3 reduced [NADPH--hemoprotein reductase] + 3 O2 = 7-carboxymellein + 3 oxidized [NADPH--hemoprotein reductase] + 4 H2O + 4 H(+). Its pathway is mycotoxin biosynthesis. Cytochrome P450 monooxygenase; part of the gene cluster that mediates the biosynthesis of ochratoxin A (OTA), a mycotoxin composed of a chlorinated type I polyketide dihydroisocoumarin moiety linked to L-phenylalanine, and demonstrated to have nephrotoxic, immunotoxic, genotoxic, neurotoxic, and teratogenic properties. OtaC catalyzes the oxidation of 7-methylmellein (7-MM) into 7-carboxymellein. The pathway begins with the highly reducing polyketide synthase otaA that catalyzes the formation of the isocoumarin group during the initial stages of biosynthesis, starting from one acetate and 4 malonate units, to originate the characteristic pentaketide skeleton 7-methylmellein (7-MM) of the OTA molecule. The newly identified cyclase otaY might be involved in the polyketide cyclization reaction during the initial steps of the OTA biosynthesis. 7-MM is then oxidized into 7-carboxymellein (also called ochratoxin beta) by the cytochrome P450 monooxygenase otaC. The NRPS encoded by the otaB gene is involved in the linking of phenylalanine to the dihydroisocoumarin ring. The reaction catalyzed by NRPS results in the production of ochratoxin B (OTB), which is the non-chlorinated analog of OTA and which subsequently serves as the substrate of the halogenase otaD for chlorination activity to form the final molecular structure of OTA, containing a chlorine atom in the C-5 position of the molecule. The polypeptide is Cytochrome P450 monooxygenase otaC (Aspergillus carbonarius (strain ITEM 5010)).